A 297-amino-acid polypeptide reads, in one-letter code: Guanylate kinase (297 aa).

A Guanylate kinase-like domain is found at 4 to 183; sequence GKMIIISGPS…AVAKITDVLH (180 aa). 11–18 provides a ligand contact to ATP; the sequence is GPSGVGKG. The unknown stretch occupies residues 204 to 297; the sequence is EQIVKEKYMY…EQKHYNNDEF (94 aa).

Belongs to the guanylate kinase family.

It localises to the cytoplasm. The enzyme catalyses GMP + ATP = GDP + ADP. In terms of biological role, essential for recycling GMP and indirectly, cGMP. The protein is Guanylate kinase (gmk) of Mycoplasma capricolum subsp. capricolum (strain California kid / ATCC 27343 / NCTC 10154).